We begin with the raw amino-acid sequence, 303 residues long: Protease HtpX (303 aa).

2 helical membrane-spanning segments follow: residues 4–24 (IGLF…VFGI) and 42–62 (IASL…ISLF). His-149 provides a ligand contact to Zn(2+). Glu-150 is an active-site residue. Position 153 (His-153) interacts with Zn(2+). Transmembrane regions (helical) follow at residues 157-177 (GDMV…MFFA) and 200-220 (FVTS…IVMW). Position 226 (Glu-226) interacts with Zn(2+).

The protein belongs to the peptidase M48B family. Requires Zn(2+) as cofactor.

Its subcellular location is the cell inner membrane. The sequence is that of Protease HtpX from Psychrobacter sp. (strain PRwf-1).